The chain runs to 99 residues: Imizoquin biosynthesis cluster protein A (99 aa).

Its pathway is secondary metabolite biosynthesis. In terms of biological role, part of the gene cluster that mediates the biosynthesis of imizoquins A to D, tripeptide-derived alkaloids that serve a protective role against oxidative stress that are essential for normal germination. ImqB is a canonical three-module NRPS that assembles the tripeptide backbone of the imizoquins via condensation of Trp, Tyr, and Leu-derived precursors. N-methylation by imqF and phenol oxidation by imqC, followed by cyclization via the FAD-dependent oxidase imqH carry out the three-step transformation of L-tyrosine into tetrahydroisoquinoline. Importantly, this sequence requires the presence of a free amine in the tyrosine moiety, indicating that isoquinoline formation occurs prior to peptide bond formation. The imidazolidin-4-one ring of imizoquins could form following additional oxidation of the methyl-derived bridgehead carbon by imqH. Lastly, O-methylation by imqG and leucine hydroxylation by imqE complete biosynthesis of the imizoquins. The polypeptide is Imizoquin biosynthesis cluster protein A (Aspergillus flavus (strain ATCC 200026 / FGSC A1120 / IAM 13836 / NRRL 3357 / JCM 12722 / SRRC 167)).